The sequence spans 427 residues: Protein phosphatase methylesterase 1 (427 aa).

The tract at residues 1–49 (MSELQKSFAKAKLAKLPPEAPPFSMHPPRDEDDSESASSTGTVVPSPSR) is disordered. Polar residues predominate over residues 36 to 49 (SASSTGTVVPSPSR). Active-site residues include Ser-207, Asp-233, and His-364. Residues 402–427 (SAAMKQGAEAGAVPPFGRGQGSSHKP) are disordered.

This sequence belongs to the AB hydrolase superfamily.

The catalysed reaction is [phosphatase 2A protein]-C-terminal L-leucine methyl ester + H2O = [phosphatase 2A protein]-C-terminal L-leucine + methanol + H(+). Demethylates proteins that have been reversibly carboxymethylated. Demethylates the phosphatase PP2A catalytic subunit. In Aspergillus oryzae (strain ATCC 42149 / RIB 40) (Yellow koji mold), this protein is Protein phosphatase methylesterase 1 (ppe1).